The primary structure comprises 210 residues: Na(+)-translocating NADH-quinone reductase subunit D (210 aa).

The next 5 membrane-spanning stretches (helical) occupy residues 42-62 (FVMT…VSLI), 72-92 (IIVQ…VLKA), 103-123 (VFVG…AFAM), 131-151 (LIDG…VGFF), and 178-198 (NGLM…IWVI).

Belongs to the NqrDE/RnfAE family. Composed of six subunits; NqrA, NqrB, NqrC, NqrD, NqrE and NqrF.

It localises to the cell inner membrane. The catalysed reaction is a ubiquinone + n Na(+)(in) + NADH + H(+) = a ubiquinol + n Na(+)(out) + NAD(+). With respect to regulation, this reaction is tightly coupled to the Na(+) pumping activity and specifically requires Na(+) for activity. Inhibited by korormicin and 2-N-heptyl-4-hydroxyquinoline N-oxide (HQNO). Functionally, NQR complex catalyzes the reduction of ubiquinone-1 to ubiquinol by two successive reactions, coupled with the transport of Na(+) ions from the cytoplasm to the periplasm. NqrA to NqrE are probably involved in the second step, the conversion of ubisemiquinone to ubiquinol. This is Na(+)-translocating NADH-quinone reductase subunit D from Vibrio alginolyticus.